A 378-amino-acid chain; its full sequence is Spermidine/putrescine import ATP-binding protein PotA (378 aa).

In terms of domain architecture, ABC transporter spans Val-18–Ile-248. Gly-50–Thr-57 contacts ATP.

The protein belongs to the ABC transporter superfamily. Spermidine/putrescine importer (TC 3.A.1.11.1) family. As to quaternary structure, the complex is composed of two ATP-binding proteins (PotA), two transmembrane proteins (PotB and PotC) and a solute-binding protein (PotD).

The protein localises to the cell inner membrane. The enzyme catalyses ATP + H2O + polyamine-[polyamine-binding protein]Side 1 = ADP + phosphate + polyamineSide 2 + [polyamine-binding protein]Side 1.. Part of the ABC transporter complex PotABCD involved in spermidine/putrescine import. Responsible for energy coupling to the transport system. The sequence is that of Spermidine/putrescine import ATP-binding protein PotA from Shigella flexneri serotype 5b (strain 8401).